Here is a 143-residue protein sequence, read N- to C-terminus: Large ribosomal subunit protein uL11 (143 aa).

It belongs to the universal ribosomal protein uL11 family. In terms of assembly, part of the ribosomal stalk of the 50S ribosomal subunit. Interacts with L10 and the large rRNA to form the base of the stalk. L10 forms an elongated spine to which L12 dimers bind in a sequential fashion forming a multimeric L10(L12)X complex. One or more lysine residues are methylated.

Functionally, forms part of the ribosomal stalk which helps the ribosome interact with GTP-bound translation factors. The polypeptide is Large ribosomal subunit protein uL11 (Kocuria rhizophila (strain ATCC 9341 / DSM 348 / NBRC 103217 / DC2201)).